We begin with the raw amino-acid sequence, 137 residues long: Peptidyl-tRNA hydrolase ArfB (137 aa).

Positions 102-137 (EKKRRPTKPTLGSKTRRLEGKARRSTVKAGRGKVDF) are disordered.

Belongs to the prokaryotic/mitochondrial release factor family. As to quaternary structure, associated with 70S ribosomes and polysomes.

The protein localises to the cytoplasm. It carries out the reaction an N-acyl-L-alpha-aminoacyl-tRNA + H2O = an N-acyl-L-amino acid + a tRNA + H(+). Functionally, rescues stalled ribosomes. Can hydrolyze peptidyl-tRNA on ribosomes stalled by both non-stop mRNAs and mRNAs that contain rare codon clusters. In Pseudomonas putida (Arthrobacter siderocapsulatus), this protein is Peptidyl-tRNA hydrolase ArfB (arfB).